The chain runs to 2380 residues: MDNSYLNNPQFDINNGNKEVTDDDNNKNNQDNLVAIVGVGFRLPSGENERNNTPQALWNNLINGFDGVVKTSERFNDNFFKNHEIANNYSGLLPLDEVKSFDPLFFGITPNEAQTIDPHQRLLLKCTWEALEDSLIDPISIKGTDTSVFIGSSTNDYLTLNRNEVKSNVFGSMAHSIANRVSYCYDLHGNSITLDTACSSSLNAIALGYDSIKNKKSKMSIVGGVNILLDPYPYKAFSILNMLSKSNGRCKSFDASADGFVRGECIGVVILKNLKDAIKDGNRIYCTINGASANVDGIGYSDKSNFYSPSSISQSENLKNAIQSTNGTVKPSDIDYVEAHGTGTPNGDPVETEGISKVFKDTRSTDTPLLIGSFKSNIGHCEAASGIASLIKCCLMYKNKCFAPNIHFKTPNPAIKFKEWNLKVVTEPIPFNENKNTSMIINNFGVTGSNCCLVLSQFNNTNKQKQQMKTKINNYLIPFSANSVESLKKYQSLIINSKENELKYSFEEFVKNQVFIKPTSLYQRSVIVAKDWNDFNNVENQVKYQTSSSTSSNITITNKNNNPITVFVFCGQGSQYNTMALELYKNEKVFRNSMDMLDNKMKNYFGYSILEKLRAIQDSDKRSVHEQTMAQPSTVIIQVSLYELYKHWGIKASFMLGHSLGEVTTAYCSGMIDIDQLCYLIYHRSTLQIRTNGLGKMLSINISSDEYKTNYMSRYPTIEIACYNSPSSIVIAGNEQILNEISKELKEKEIFSAMLGSLSSFHTSSQNIIKDDILNLNIQSSQPVIPTFSTVTSNLFNESTIFDSEYFFDNISKPVSFTQTISNLYKHIEDNQIGSNIVFIEIAPHPTLSFYLKQMIPKQSQYFRNGESISVYSTLHKKKNDVEEFQKSISQLFCDDAYDINFKCQFNNINSNIEAISNFNLPLYQWDDQHYWLNKSIEHKNNLIGPPISILGNSMQDSNPFIKSYQTIIDTGKDAFKYLKGHNVSDKCYFPGAGYIDNLLKLYPNQDLTINSIEFKTPLILSDDNGQFLQTNVYQTGKSDYRAQFHFKDNRTNVWVQTCTANFQLYNNGKVDKLNLEEIKSTKCNLSSIPWDKFYPHIKNRTGLNYKDKFQNTIECYLGDNCSLTEISLELPENFHDQESFFNTPILDICFHGSIVLIKDNCKLVLDKIDGFKLYTSNIPKNRFDHLSIFVYTTMKSTKSNSYNSTYTVMLEDGTVILEVENLICTSLTPVKDPLLIEIPTDMYYTPYLQSKDSQIQSPLEFKSIYQNNQDNDSLLIPNVVLETIKPLINEQMEFRILEFGGNNLSNSTLLLNSINSLLEENPHYEIDIEYTWSDNNSSILKDAKLELSKVDKGYLSILYRSLGLDVDNSLLEKQKLNPSYYDLIIVSNISNLTKDIKYSLNQIYQILTPNGNLIINEQQPNNENNENNEDSLKNLLVNCNFNSDIMMKSSSVSDSDIKSIIIQAQKPSLKLQPKTINTFDQVILYCNQDEQFQQQQQLINKFESHYNNNCKIIKVSTIEEFYKLSTTITNNSIIYFIKSIEQLTLENFKSITFEYVQINQKLYEFKSKCTHVLITYDSQSSNYLSSSILGAARYFDEIPTLQLFTFDFDKDSLINLDISVIDHLIDPKQNTLIEFFIKKNGKVYFERFKKGLKKNSFKSESYHQITNEQEILISKLDENLDYQLKSKDSILKPYDIEVEIKATGLNYKDYLVYSGLIKLKGDSVDFGLDFSGRVSRVGIKSSKEFKVGDEVYGIGQSTSSSHIIIDSMHACHKPSKITHVQAASIPAVYATSIHSLYNIGNLREGESILIHSGSGGVGLSALEILKSNNHSSPIFVTVGSEEKKQYLINTYGNLITGIYSTRDTNYQKQIKNKLIELGYETHGVDLIINTLSSEFMDSNFKCLNPEGRIVDLTITHLNPNEFIDNNKFKYNFGYHNIELYYCEKPTIKKLLQSISKSIENNTLNYLIPITEFSNSNIKKAIEYINERKHVGKIVISHDTDITNKLIENQPKIDYSLLKSNYKIKNLGKNVLVTGQTGLILDIINWIMKYNSTVENIIILSKSSMKWEMEFLINNNKTKIKFYYKRCDIGGDSDSINKTFDKLFTENPTITNIDSIFHFAVVQITRKVKDIDMKSLNISHDAKTIGAINLHNQSIKRDWKLSNFILASSILSKVGSLDQCGYVSACCVLDSFSKYRLSIGLPALSINIGAMGGSGMVARSELVETVLNGQGYNLTSTNQLLGTIDLLIQNPGQESNNLMVGNFNFPVFNNFKQKIHQKFDFIFNALDSNSENGDGSNIKNSTNIKDKFLNKVSEFLSIDSSKINNDIKLMNYGADSLITVQLKNWVDKEWSPNLITIHQIQSNSIGMVCQIINDNFEKKK.

Residues 1-18 (MDNSYLNNPQFDINNGNK) show a composition bias toward polar residues. A disordered region spans residues 1 to 29 (MDNSYLNNPQFDINNGNKEVTDDDNNKNN). A Ketosynthase family 3 (KS3) domain is found at 31–457 (DNLVAIVGVG…GSNCCLVLSQ (427 aa)). Residues cysteine 198, histidine 340, and histidine 380 each act as for beta-ketoacyl synthase activity in the active site. The tract at residues 649 to 682 (GIKASFMLGHSLGEVTTAYCSGMIDIDQLCYLIY) is acyl/malonyl transferase. The active-site For acyl/malonyl transferase activity is the serine 659. Residues 948 to 1070 (ISILGNSMQD…ANFQLYNNGK (123 aa)) form an N-terminal hotdog fold region. The region spanning 948–1234 (ISILGNSMQD…CTSLTPVKDP (287 aa)) is the PKS/mFAS DH domain. Histidine 982 acts as the Proton acceptor; for dehydratase activity in catalysis. Residues 1085-1234 (NLSSIPWDKF…CTSLTPVKDP (150 aa)) form a C-terminal hotdog fold region. The active-site Proton donor; for dehydratase activity is the aspartate 1148. A Carrier domain is found at 2299-2376 (KNSTNIKDKF…MVCQIINDNF (78 aa)). Residue serine 2336 is modified to O-(pantetheine 4'-phosphoryl)serine.

The cofactor is pantetheine 4'-phosphate.

Its function is as follows. Probable polyketide synthase. In Dictyostelium discoideum (Social amoeba), this protein is Probable polyketide synthase 25 (pks25).